A 623-amino-acid polypeptide reads, in one-letter code: Ciliated left-right organizer metallopeptidase (623 aa).

Residues 1-20 (MSFLLCIGILLLPWFPCVCG) form the signal peptide. At 21-578 (KCIFDQIQRS…LFLVSEAKIS (558 aa)) the chain is on the extracellular side. H249 is a Zn(2+) binding site. E250 is an active-site residue. Zn(2+) contacts are provided by H253 and H326. The chain crosses the membrane as a helical span at residues 579 to 599 (LAAVLSLMAVFALLSAAVLLY). Residues 600 to 623 (RKNLSVRVHAASYRTPLPHILYRN) are Cytoplasmic-facing.

The protein belongs to the peptidase M8 family. It depends on Zn(2+) as a cofactor. In terms of tissue distribution, expressed specifically in dorsal forerunner cells (DFCs) that form a ciliated Kupffer's vesicle later.

It is found in the membrane. In terms of biological role, plays an essential role for patterning the left-right axis. Requires solely on the left side, downstream of the leftward flow, but upstream of dand5, a nodal inhibitor involved in left-right patterning. This is Ciliated left-right organizer metallopeptidase (cirop) from Danio rerio (Zebrafish).